Here is a 353-residue protein sequence, read N- to C-terminus: MIDRLKKIQEKYLRIEDELAKATASDTLKNLSKERSRLTPVYTKADEYLKITKDCQDAKSLLESENDPDMHSMLKSEIEEGEKKLEELAKELEIMLLPPDPNSGKSILVEIRAGTGGEESGLFCADLFRMYNKYADKKGLRVEIIDMSQTGIGGYKEIVFSLDDDKAYDLFKFESGTHRVQRIPETESGGRIHTSAVTVAILPEAEEKEVEIKESDLRIDVYRSSGAGGQHVNTTDSAVRITHIPTGIVVASQEERSQIKNRDKAMRVLRARIADQAAETAKLSADALKKAQVGSGDRSERIRTYNFPQGRCTDHRIGFTSHNLPAIMEGDLDELIDALIQEDRSKRLAEAKA.

N5-methylglutamine is present on glutamine 230.

The protein belongs to the prokaryotic/mitochondrial release factor family. Post-translationally, methylated by PrmC. Methylation increases the termination efficiency of RF1.

The protein resides in the cytoplasm. Peptide chain release factor 1 directs the termination of translation in response to the peptide chain termination codons UAG and UAA. The polypeptide is Peptide chain release factor 1 (Leptospira biflexa serovar Patoc (strain Patoc 1 / ATCC 23582 / Paris)).